The chain runs to 182 residues: ATP synthase subunit delta (182 aa).

This sequence belongs to the ATPase delta chain family. In terms of assembly, F-type ATPases have 2 components, F(1) - the catalytic core - and F(0) - the membrane proton channel. F(1) has five subunits: alpha(3), beta(3), gamma(1), delta(1), epsilon(1). CF(0) has four main subunits: a(1), b(1), b'(1) and c(10-14). The alpha and beta chains form an alternating ring which encloses part of the gamma chain. F(1) is attached to F(0) by a central stalk formed by the gamma and epsilon chains, while a peripheral stalk is formed by the delta, b and b' chains.

The protein resides in the cellular thylakoid membrane. In terms of biological role, f(1)F(0) ATP synthase produces ATP from ADP in the presence of a proton or sodium gradient. F-type ATPases consist of two structural domains, F(1) containing the extramembraneous catalytic core and F(0) containing the membrane proton channel, linked together by a central stalk and a peripheral stalk. During catalysis, ATP synthesis in the catalytic domain of F(1) is coupled via a rotary mechanism of the central stalk subunits to proton translocation. Functionally, this protein is part of the stalk that links CF(0) to CF(1). It either transmits conformational changes from CF(0) to CF(1) or is implicated in proton conduction. The polypeptide is ATP synthase subunit delta (Prochlorococcus marinus (strain MIT 9303)).